We begin with the raw amino-acid sequence, 1347 residues long: Protein dispatched homolog 3 (1347 aa).

Residues 1 to 67 (MDSEDDPLLQ…LGWAFTNPCC (67 aa)) lie on the Cytoplasmic side of the membrane. The helical transmembrane segment at 68–88 (AGLVLFLGCSIPMVLSAFMFL) threads the bilayer. Topologically, residues 89–417 (YYPPLDIDIS…YEVRRTFNND (329 aa)) are lumenal. The segment at 156-207 (GNHSRPASRAPRSAPRDTVATQTSAANSSERRRREAPSPEGQVTNQSRARRG) is disordered. An N-linked (GlcNAc...) asparagine glycan is attached at Asn-157. Residues 159–168 (SRPASRAPRS) show a composition bias toward low complexity. The SSD domain occupies 412-570 (RTFNNDMLLA…LFTMPAALGL (159 aa)). A helical membrane pass occupies residues 418–438 (MLLAFISSSCIAALVYILTSC). Position 439 (Ser-439) is a topological domain, cytoplasmic. Residues 440–460 (VFLSFFGIASIGLSCLVALFL) form a helical membrane-spanning segment. The Lumenal segment spans residues 461–463 (YHV). A helical membrane pass occupies residues 464 to 484 (VFGIQYLGILNGVAAFVIVGI). The Cytoplasmic portion of the chain corresponds to 485–528 (GVDDVFVFINTYRQATHLEDPQLRMIHTIQTAGKATFFTSLTTA). A helical transmembrane segment spans residues 529-549 (AAYAANVFSQIPAVHDFGLFM). A topological domain (lumenal) is located at residue Ser-550. A helical transmembrane segment spans residues 551-571 (LIVTCCWLAVLFTMPAALGLW). At 572–684 (SLYMAPLESS…WVLWAAVKSR (113 aa)) the chain is on the cytoplasmic side. The helical transmembrane segment at 685–705 (WVIVGLFASILILSLVFASRL) threads the bilayer. At 706-1137 (RPASRAPLLF…IFMEIIGVQS (432 aa)) the chain is on the lumenal side. Asn-976 carries an N-linked (GlcNAc...) asparagine glycan. Residues 1138–1158 (ALYGLVLSLLICVAAVAVFTT) traverse the membrane as a helical segment. A topological domain (cytoplasmic) is located at residue His-1159. Residues 1160–1180 (VLLLLPVLLSILGIVCLVVTI) form a helical membrane-spanning segment. Residues 1181-1246 (MYWSGWEMGA…TLEAVRHVGV (66 aa)) lie on the Lumenal side of the membrane. Residues 1247-1267 (AIVSSALTTVIATVPLFFCII) form a helical membrane-spanning segment. Topologically, residues 1268 to 1281 (APFAKFGKIVALNT) are cytoplasmic. A helical transmembrane segment spans residues 1282-1302 (GVSILYTLTVSTALLGIMAPG). Residues 1303 to 1310 (SFTRTRTS) lie on the Lumenal side of the membrane. Residues 1311 to 1331 (FLKALGAVLLAGALGLGACLV) form a helical membrane-spanning segment. Over 1332–1347 (LLRSGYKIPLPSGATL) the chain is Cytoplasmic.

It belongs to the patched family. In terms of tissue distribution, expressed in brain, retina, testis and thymus.

Its subcellular location is the endoplasmic reticulum membrane. The protein resides in the nucleus membrane. The protein localises to the cytoplasmic vesicle membrane. In terms of biological role, plays a role in neuronal proliferation and differentiation. Plays a role in the accumulation of cellular cholesterol. Involved in intracellular lipid droplet formation. May contribute to cholesterol homeostasis in neuronal cells. This is Protein dispatched homolog 3 from Mus musculus (Mouse).